A 443-amino-acid polypeptide reads, in one-letter code: D-aminoacyl-tRNA deacylase (443 aa).

It belongs to the DtdA deacylase family. As to quaternary structure, monomer. Zn(2+) is required as a cofactor.

It catalyses the reaction a D-aminoacyl-tRNA + H2O = a tRNA + a D-alpha-amino acid + H(+). It carries out the reaction glycyl-tRNA(Ala) + H2O = tRNA(Ala) + glycine + H(+). D-aminoacyl-tRNA deacylase with broad substrate specificity. By recycling D-aminoacyl-tRNA to D-amino acids and free tRNA molecules, this enzyme counteracts the toxicity associated with the formation of D-aminoacyl-tRNA entities in vivo. The protein is D-aminoacyl-tRNA deacylase of Methanocorpusculum labreanum (strain ATCC 43576 / DSM 4855 / Z).